A 141-amino-acid polypeptide reads, in one-letter code: Nucleoside diphosphate kinase (141 aa).

Positions 11, 59, 87, 93, 104, and 114 each coordinate ATP. H117 acts as the Pros-phosphohistidine intermediate in catalysis.

This sequence belongs to the NDK family. As to quaternary structure, homotetramer. Mg(2+) serves as cofactor.

It is found in the cytoplasm. The catalysed reaction is a 2'-deoxyribonucleoside 5'-diphosphate + ATP = a 2'-deoxyribonucleoside 5'-triphosphate + ADP. The enzyme catalyses a ribonucleoside 5'-diphosphate + ATP = a ribonucleoside 5'-triphosphate + ADP. Functionally, major role in the synthesis of nucleoside triphosphates other than ATP. The ATP gamma phosphate is transferred to the NDP beta phosphate via a ping-pong mechanism, using a phosphorylated active-site intermediate. The chain is Nucleoside diphosphate kinase from Teredinibacter turnerae (strain ATCC 39867 / T7901).